Reading from the N-terminus, the 256-residue chain is MLRIADKTFESHLFTGTGKFAAPKVMVEAIRASGSQLVTLAMKRVDLRQRNDAILAPLLAAGVSLLPNTSGAKTAEEAVFAARLAREALGTHWLKLEIHPDARWLLPDPIETLKAAELLVREGFVVLPYCGADPVLCKRLEEVGCAAVMPLGAPIGSNQGLETKAMLEIIIEQATVPVVVDAGIGVPSHAAQALEMGADAVLVNTAIAVADDPVAMARAFRMAIDAGLLARQAGPGARSTQAQATSPLTGFLEALA.

Lys95 (schiff-base intermediate with DXP) is an active-site residue. 1-deoxy-D-xylulose 5-phosphate-binding positions include Gly156, 182–183 (AG), and 204–205 (NT).

The protein belongs to the ThiG family. Homotetramer. Forms heterodimers with either ThiH or ThiS.

Its subcellular location is the cytoplasm. The catalysed reaction is [ThiS sulfur-carrier protein]-C-terminal-Gly-aminoethanethioate + 2-iminoacetate + 1-deoxy-D-xylulose 5-phosphate = [ThiS sulfur-carrier protein]-C-terminal Gly-Gly + 2-[(2R,5Z)-2-carboxy-4-methylthiazol-5(2H)-ylidene]ethyl phosphate + 2 H2O + H(+). It participates in cofactor biosynthesis; thiamine diphosphate biosynthesis. Catalyzes the rearrangement of 1-deoxy-D-xylulose 5-phosphate (DXP) to produce the thiazole phosphate moiety of thiamine. Sulfur is provided by the thiocarboxylate moiety of the carrier protein ThiS. In vitro, sulfur can be provided by H(2)S. The polypeptide is Thiazole synthase (Klebsiella pneumoniae subsp. pneumoniae (strain ATCC 700721 / MGH 78578)).